The following is a 613-amino-acid chain: Potassium voltage-gated channel subfamily A member 5 (613 aa).

Residues 1–108 (MEIALVPLEN…EGDPGLGTVE (108 aa)) form a disordered region. Positions 1 to 211 (MEIALVPLEN…FYQLGDEAME (211 aa)) are tetramerization domain. Residues 1–247 (MEIALVPLEN…LIFEYPESSG (247 aa)) are Cytoplasmic-facing. Residues 45-62 (GPKEPAPKGRGAQRDADS) show a composition bias toward basic and acidic residues. Tandem repeats lie at residues 61–71 (DSGVRPLPPLP) and 72–82 (DPGVRPLPPLP). The interval 61-82 (DSGVRPLPPLPDPGVRPLPPLP) is 2 X 11 AA tandem repeat of D-[SP]-G-V-R-P-L-P-P-L-P. Residues 66 to 83 (PLPPLPDPGVRPLPPLPE) show a composition bias toward pro residues. The span at 84–93 (ELPRPRRPPP) shows a compositional bias: basic and acidic residues. Lysine 221 is covalently cross-linked (Glycyl lysine isopeptide (Lys-Gly) (interchain with G-Cter in SUMO)). A helical membrane pass occupies residues 248 to 269 (SARAIAIVSVLVILISIITFCL). At 270–323 (ETLPEFRDERELLRHPPAPHQPPAPAPGANGSGVMAPPSGPTVAPLLPRTLADP) the chain is on the extracellular side. The disordered stretch occupies residues 282–304 (LRHPPAPHQPPAPAPGANGSGVM). A compositionally biased stretch (pro residues) spans 285–295 (PPAPHQPPAPA). A helical membrane pass occupies residues 324-345 (FFIVETTCVIWFTFELLVRFFA). The S-palmitoyl cysteine moiety is linked to residue cysteine 346. The Cytoplasmic portion of the chain corresponds to 346–356 (CPSKAGFSRNI). The helical transmembrane segment at 357 to 377 (MNIIDVVAIFPYFITLGTELA) threads the bilayer. The Extracellular segment spans residues 378-395 (EQQPGGGGGGQNGQQAMS). Residues 396–416 (LAILRVIRLVRVFRIFKLSRH) traverse the membrane as a helical; Voltage-sensor segment. Residues 417-431 (SKGLQILGKTLQASM) are Cytoplasmic-facing. The S4-S5 linker stretch occupies residues 418-431 (KGLQILGKTLQASM). A helical transmembrane segment spans residues 432–453 (RELGLLIFFLFIGVILFSSAVY). The Extracellular segment spans residues 454 to 467 (FAEADNQGTHFSSI). The helical intramembrane region spans 468-479 (PDAFWWAVVTMT). The Selectivity filter signature appears at 480–485 (TVGYGD). Residues 480–487 (TVGYGDMR) lie within the membrane without spanning it. At 488–494 (PITVGGK) the chain is on the extracellular side. Residues 495–523 (IVGSLCAIAGVLTIALPVPVIVSNFNYFY) traverse the membrane as a helical segment. Residues 524 to 613 (HRETDHEEPA…CLDTSRETDL (90 aa)) are Cytoplasmic-facing. Residues 532-559 (PAVLKEEQGTQSQGPGLDRGVQRKVSGS) form a disordered region. Residue lysine 536 forms a Glycyl lysine isopeptide (Lys-Gly) (interchain with G-Cter in SUMO) linkage. The residue at position 557 (serine 557) is a Phosphoserine; by PKA. Residues 611–613 (TDL) carry the PDZ-binding motif.

Belongs to the potassium channel family. A (Shaker) (TC 1.A.1.2) subfamily. Kv1.5/KCNA5 sub-subfamily. As to quaternary structure, homotetramer and heterotetramer of potassium channel proteins. Interacts with DLG1, which enhances channel currents. Forms a ternary complex with DLG1 and CAV3. Interacts with KCNAB1. Interacts with UBE2I. Interacts with XIRP2; the interaction is required for normal action potential configuration in the heart. Glycosylated. In terms of processing, sumoylated on Lys-221, and Lys-536, preferentially with SUMO3. Sumoylation regulates the voltage sensitivity of the channel. In terms of tissue distribution, pancreatic islets and insulinoma.

The protein resides in the cell membrane. It carries out the reaction K(+)(in) = K(+)(out). Inhibited by 4-aminopyridine, nicotine, bepridil, correolide, and endothelin-1. Its function is as follows. Voltage-gated potassium channel that mediates transmembrane potassium transport in excitable membranes. Forms tetrameric potassium-selective channels through which potassium ions pass in accordance with their electrochemical gradient. The channel alternates between opened and closed conformations in response to the voltage difference across the membrane. Can form functional homotetrameric channels and heterotetrameric channels that contain variable proportions of KCNA1, KCNA2, KCNA4, KCNA5, and possibly other family members as well; channel properties depend on the type of alpha subunits that are part of the channel. Channel properties are modulated by cytoplasmic beta subunits that regulate the subcellular location of the alpha subunits and promote rapid inactivation. Homotetrameric channels display rapid activation and slow inactivation. Required for normal electrical conduction including formation of the infranodal ventricular conduction system and normal action potential configuration, as a result of its interaction with XIRP2. May play a role in regulating the secretion of insulin in normal pancreatic islets. Exhibits a faster depolarization rate, reduced voltage-dependent recovery from inactivation and an excessive cumulative inactivation. This is Potassium voltage-gated channel subfamily A member 5 (KCNA5) from Homo sapiens (Human).